The chain runs to 344 residues: Putative voltage-gated potassium channel subunit beta (344 aa).

NADP(+)-binding residues include Trp-33, Asp-62, Tyr-67, Ser-167, Gln-193, Trp-222, Ser-223, Pro-224, Leu-225, Lys-233, Arg-243, Gly-301, Ser-303, Gln-307, Glu-310, and Asn-311. Catalysis depends on Tyr-67, which acts as the Proton donor/acceptor.

The protein belongs to the shaker potassium channel beta subunit family. Forms heteromultimeric complexes with potassium channel alpha subunits.

It localises to the cytoplasm. Its subcellular location is the nucleus. Its function is as follows. Probable accessory potassium channel protein which modulates the activity of the pore-forming alpha subunit. The sequence is that of Putative voltage-gated potassium channel subunit beta from Schizosaccharomyces pombe (strain 972 / ATCC 24843) (Fission yeast).